The following is a 109-amino-acid chain: Large ribosomal subunit protein uL22 (109 aa).

Residues 84–95 are compositionally biased toward basic residues; sequence ARGTASRIRKPT. Residues 84–109 are disordered; that stretch reads ARGTASRIRKPTSHIMVEVSKPSKEA.

It belongs to the universal ribosomal protein uL22 family. In terms of assembly, part of the 50S ribosomal subunit.

Functionally, this protein binds specifically to 23S rRNA; its binding is stimulated by other ribosomal proteins, e.g. L4, L17, and L20. It is important during the early stages of 50S assembly. It makes multiple contacts with different domains of the 23S rRNA in the assembled 50S subunit and ribosome. In terms of biological role, the globular domain of the protein is located near the polypeptide exit tunnel on the outside of the subunit, while an extended beta-hairpin is found that lines the wall of the exit tunnel in the center of the 70S ribosome. The chain is Large ribosomal subunit protein uL22 from Campylobacter hominis (strain ATCC BAA-381 / DSM 21671 / CCUG 45161 / LMG 19568 / NCTC 13146 / CH001A).